The following is a 250-amino-acid chain: HLA class II histocompatibility antigen, DO alpha chain (250 aa).

A signal peptide spans 1–25 (MALRAGLVLGFHTLMTLLSPQEAGA). The interval 26-110 (TKADHMGSYG…ERSNRSRAIN (85 aa)) is alpha-1. The Extracellular segment spans residues 26–217 (TKADHMGSYG…VPIPPPDAME (192 aa)). N-linked (GlcNAc...) asparagine glycans are attached at residues N104 and N144. Residues 111–204 (VPPRVTVLPK…GLDAPLLRHW (94 aa)) form an alpha-2 region. The region spanning 113 to 205 (PRVTVLPKSR…LDAPLLRHWE (93 aa)) is the Ig-like C1-type domain. C133 and C189 are disulfide-bonded. The connecting peptide stretch occupies residues 205–217 (ELQVPIPPPDAME). A helical membrane pass occupies residues 218-240 (TLVCALGLAIGLVGFLVGTVLII). Residues 241-250 (MGTYVSSVPR) are Cytoplasmic-facing.

The protein belongs to the MHC class II family. In terms of assembly, heterodimer of an alpha chain (DOA) and a beta chain (DOB). Forms a heterotetrameric complex with an HLA-DM molecule during intracellular transport in endosomal/lysosomal compartments in B-cells.

It localises to the endosome membrane. The protein localises to the lysosome membrane. Its function is as follows. Important modulator in the HLA class II restricted antigen presentation pathway by interaction with the HLA-DM molecule in B-cells. Modifies peptide exchange activity of HLA-DM. The sequence is that of HLA class II histocompatibility antigen, DO alpha chain (HLA-DOA) from Homo sapiens (Human).